The chain runs to 143 residues: Transcriptional regulator MraZ (143 aa).

SpoVT-AbrB domains follow at residues 5 to 47 and 76 to 119; these read EFRH…PMKE and ATEC…DEAR.

Belongs to the MraZ family. As to quaternary structure, forms oligomers.

It is found in the cytoplasm. It localises to the nucleoid. The polypeptide is Transcriptional regulator MraZ (Enterococcus hirae).